An 89-amino-acid chain; its full sequence is Small ribosomal subunit protein uS15 (89 aa).

Belongs to the universal ribosomal protein uS15 family. Part of the 30S ribosomal subunit. Forms a bridge to the 50S subunit in the 70S ribosome, contacting the 23S rRNA.

Its function is as follows. One of the primary rRNA binding proteins, it binds directly to 16S rRNA where it helps nucleate assembly of the platform of the 30S subunit by binding and bridging several RNA helices of the 16S rRNA. Forms an intersubunit bridge (bridge B4) with the 23S rRNA of the 50S subunit in the ribosome. This is Small ribosomal subunit protein uS15 from Rhizobium etli (strain CIAT 652).